The chain runs to 176 residues: V-type proton ATPase 16 kDa proteolipid subunit (176 aa).

Residues 1–17 are Lumenal-facing; that stretch reads MSVLLRSVTELCPVYSP. A helical transmembrane segment spans residues 18–38; the sequence is FFGSMGITASIVFTVFGGAYG. Residues 39–62 are Cytoplasmic-facing; the sequence is TAKSSVGISSVGVMKPEFIMRSLF. A helical transmembrane segment spans residues 63–83; that stretch reads PVVFAGVIGLYGLIVCIVLFI. Residues 84–98 lie on the Lumenal side of the membrane; sequence NVNKSEYSLNRAFLD. Residues 99 to 119 form a helical membrane-spanning segment; that stretch reads LGAGLTCGLCGLASGMSIGIS. Topologically, residues 120–136 are cytoplasmic; that stretch reads GDCGVRGAAQQPKLFVS. The chain crosses the membrane as a helical span at residues 137-157; that stretch reads MLICLIFSEALALYGFIVALI. Over 158–176 the chain is Lumenal; the sequence is MAATGDNSCVATASTSSSS.

The protein belongs to the V-ATPase proteolipid subunit family. As to quaternary structure, V-ATPase is a heteromultimeric enzyme composed of a peripheral catalytic V1 complex (main components: subunits A, B, C, D, E, and F) attached to an integral membrane V0 proton pore complex (main component: the proteolipid protein; which is present as a hexamer that forms the proton-conducting pore).

It is found in the vacuole membrane. Its function is as follows. Proton-conducting pore forming subunit of the membrane integral V0 complex of vacuolar ATPase. V-ATPase is responsible for acidifying a variety of intracellular compartments in eukaryotic cells. In Entamoeba dispar, this protein is V-type proton ATPase 16 kDa proteolipid subunit (VMA3).